A 168-amino-acid polypeptide reads, in one-letter code: PTS system glucose-specific EIIA component (168 aa).

The PTS EIIA type-1 domain maps to 38–142; that stretch reads DEVFSNKIVG…STLTPVIISN (105 aa). His75 and His90 together coordinate Zn(2+). Catalysis depends on His90, which acts as the Tele-phosphohistidine intermediate; for EIIA activity. Phosphohistidine; by HPr is present on His90.

Zn(2+) serves as cofactor.

It is found in the cytoplasm. Functionally, the phosphoenolpyruvate-dependent sugar phosphotransferase system (sugar PTS), a major carbohydrate active transport system, catalyzes the phosphorylation of incoming sugar substrates concomitantly with their translocation across the cell membrane. The enzyme II complex composed of PtsG and Crr is involved in glucose transport. This is PTS system glucose-specific EIIA component (crr) from Buchnera aphidicola subsp. Baizongia pistaciae (strain Bp).